We begin with the raw amino-acid sequence, 107 residues long: Nucleoid-associated protein Msil_0275 (107 aa).

This sequence belongs to the YbaB/EbfC family. As to quaternary structure, homodimer.

It is found in the cytoplasm. The protein resides in the nucleoid. Functionally, binds to DNA and alters its conformation. May be involved in regulation of gene expression, nucleoid organization and DNA protection. This Methylocella silvestris (strain DSM 15510 / CIP 108128 / LMG 27833 / NCIMB 13906 / BL2) protein is Nucleoid-associated protein Msil_0275.